The chain runs to 239 residues: 1-(5-phosphoribosyl)-5-[(5-phosphoribosylamino)methylideneamino] imidazole-4-carboxamide isomerase (239 aa).

D9 serves as the catalytic Proton acceptor. The Proton donor role is filled by D131.

This sequence belongs to the HisA/HisF family.

It localises to the cytoplasm. The enzyme catalyses 1-(5-phospho-beta-D-ribosyl)-5-[(5-phospho-beta-D-ribosylamino)methylideneamino]imidazole-4-carboxamide = 5-[(5-phospho-1-deoxy-D-ribulos-1-ylimino)methylamino]-1-(5-phospho-beta-D-ribosyl)imidazole-4-carboxamide. It functions in the pathway amino-acid biosynthesis; L-histidine biosynthesis; L-histidine from 5-phospho-alpha-D-ribose 1-diphosphate: step 4/9. The polypeptide is 1-(5-phosphoribosyl)-5-[(5-phosphoribosylamino)methylideneamino] imidazole-4-carboxamide isomerase (Bacteroides fragilis (strain YCH46)).